The primary structure comprises 348 residues: Protein RecA (348 aa).

An ATP-binding site is contributed by 65 to 72; it reads GPESSGKT. The tract at residues 328–348 is disordered; that stretch reads SKPQAETSARLATQEELADDY.

It belongs to the RecA family.

The protein localises to the cytoplasm. In terms of biological role, can catalyze the hydrolysis of ATP in the presence of single-stranded DNA, the ATP-dependent uptake of single-stranded DNA by duplex DNA, and the ATP-dependent hybridization of homologous single-stranded DNAs. It interacts with LexA causing its activation and leading to its autocatalytic cleavage. The chain is Protein RecA from Ectopseudomonas oleovorans (Pseudomonas oleovorans).